The chain runs to 128 residues: Phosphoribosyl-AMP cyclohydrolase (128 aa).

Asp-79 contacts Mg(2+). Cys-80 is a Zn(2+) binding site. Residues Asp-81 and Asp-83 each contribute to the Mg(2+) site. Zn(2+) is bound by residues Cys-97 and Cys-104.

This sequence belongs to the PRA-CH family. In terms of assembly, homodimer. The cofactor is Mg(2+). Zn(2+) is required as a cofactor.

The protein localises to the cytoplasm. It catalyses the reaction 1-(5-phospho-beta-D-ribosyl)-5'-AMP + H2O = 1-(5-phospho-beta-D-ribosyl)-5-[(5-phospho-beta-D-ribosylamino)methylideneamino]imidazole-4-carboxamide. Its pathway is amino-acid biosynthesis; L-histidine biosynthesis; L-histidine from 5-phospho-alpha-D-ribose 1-diphosphate: step 3/9. Catalyzes the hydrolysis of the adenine ring of phosphoribosyl-AMP. This chain is Phosphoribosyl-AMP cyclohydrolase, found in Saccharophagus degradans (strain 2-40 / ATCC 43961 / DSM 17024).